Consider the following 346-residue polypeptide: Zinc finger CCCH domain-containing protein 28 (346 aa).

Positions 1–99 are disordered; sequence MASAETPNPD…SPRYPDGKRR (99 aa). Low complexity predominate over residues 17-41; sequence DAAAAADPAAAAPAAAATDPAAAGS. Positions 62–86 are enriched in basic residues; the sequence is RSSRSRSRSPRRGRSRSRSRSRSRG. C3H1-type zinc fingers lie at residues 103–131, 138–165, 181–209, 211–237, 282–308, and 314–340; these read DLNV…HPHP, DSKV…HPPP, KVKM…HHSP, EDCA…HVMA, NYGV…HPDL, and NTQV…HPPA.

In Oryza sativa subsp. japonica (Rice), this protein is Zinc finger CCCH domain-containing protein 28.